The following is a 269-amino-acid chain: Staphylococcal secretory antigen ssaA2 (269 aa).

Positions 1–27 (MKKIATATIATAGFATIAIASGNQAHA) are cleaved as a signal peptide. 7 repeat units span residues 83–85 (YNN), 88–90 (YNN), 91–93 (YNN), 97–99 (YNN), 103–105 (YNN), 106–108 (YSN), and 115–117 (YNN). A 7 X 3 AA repeats of Y-[NS]-N region spans residues 83–115 (YNNYSYNNYNNGYSYNNYSRYNNYSNNNQSYNY). In terms of domain architecture, Peptidase C51 spans 148–269 (MAPSSNGRSI…SQAAGYNFIH (122 aa)).

The protein resides in the secreted. Not known; immunogenic protein. The sequence is that of Staphylococcal secretory antigen ssaA2 (ssaA2) from Staphylococcus aureus (strain MRSA252).